The sequence spans 232 residues: 5'-methylthioadenosine/S-adenosylhomocysteine nucleosidase (232 aa).

The active-site Proton acceptor is glutamate 12. Substrate contacts are provided by residues glycine 78, isoleucine 152, and 173–174 (ME). Aspartate 197 functions as the Proton donor in the catalytic mechanism.

Belongs to the PNP/UDP phosphorylase family. MtnN subfamily. As to quaternary structure, homodimer.

It catalyses the reaction S-adenosyl-L-homocysteine + H2O = S-(5-deoxy-D-ribos-5-yl)-L-homocysteine + adenine. It carries out the reaction S-methyl-5'-thioadenosine + H2O = 5-(methylsulfanyl)-D-ribose + adenine. The catalysed reaction is 5'-deoxyadenosine + H2O = 5-deoxy-D-ribose + adenine. It participates in amino-acid biosynthesis; L-methionine biosynthesis via salvage pathway; S-methyl-5-thio-alpha-D-ribose 1-phosphate from S-methyl-5'-thioadenosine (hydrolase route): step 1/2. Functionally, catalyzes the irreversible cleavage of the glycosidic bond in both 5'-methylthioadenosine (MTA) and S-adenosylhomocysteine (SAH/AdoHcy) to adenine and the corresponding thioribose, 5'-methylthioribose and S-ribosylhomocysteine, respectively. Also cleaves 5'-deoxyadenosine, a toxic by-product of radical S-adenosylmethionine (SAM) enzymes, into 5-deoxyribose and adenine. Thus, is required for in vivo function of the radical SAM enzymes biotin synthase and lipoic acid synthase, that are inhibited by 5'-deoxyadenosine accumulation. This Salmonella enteritidis PT4 (strain P125109) protein is 5'-methylthioadenosine/S-adenosylhomocysteine nucleosidase.